The sequence spans 102 residues: uncharacterized protein (102 aa).

Helical transmembrane passes span 14 to 34 (IKNWINFIKPIITIVGIVISA), 35 to 55 (VAFTISILWGMLFLILFLILI), and 76 to 96 (ILSIIGSIIIISIIVYSHCYI).

The protein resides in the cell membrane. This is an uncharacterized protein from Methanocaldococcus jannaschii (strain ATCC 43067 / DSM 2661 / JAL-1 / JCM 10045 / NBRC 100440) (Methanococcus jannaschii).